A 402-amino-acid polypeptide reads, in one-letter code: 2-pyrone synthase (402 aa).

Acetoacetyl-CoA is bound by residues Lys-60, Arg-63, Cys-169, Leu-272, Arg-274, Gly-310, Arg-312, and Ala-313. The active site involves Cys-169.

It belongs to the thiolase-like superfamily. Chalcone/stilbene synthases family. As to expression, expressed in both vegetative and reproductive organs. The expression is strong in the leaf, scape (the inflorescence stem) and corolla (both in the ligule and the unpigmented tube), moderate in the bract and carpel, detectable in the root and pappus but not detectable in the stamen.

The catalysed reaction is 2 malonyl-CoA + acetyl-CoA + 2 H(+) = triacetate lactone + 2 CO2 + 3 CoA. Its function is as follows. Polyketide synthase, which uses acetyl-CoA and two condensation reactions with malonyl-CoA to form triacetic acid lactone (also called methylpyrone), a precursor of phytoalexin. May participate in insect and pathogen resistance. The sequence is that of 2-pyrone synthase from Gerbera hybrida (Daisy).